A 266-amino-acid chain; its full sequence is Putative carbamate hydrolase RutD (266 aa).

The protein belongs to the AB hydrolase superfamily. Hydrolase RutD family.

It catalyses the reaction carbamate + 2 H(+) = NH4(+) + CO2. Functionally, involved in pyrimidine catabolism. May facilitate the hydrolysis of carbamate, a reaction that can also occur spontaneously. The chain is Putative carbamate hydrolase RutD from Escherichia coli O157:H7.